The primary structure comprises 105 residues: UPF0473 protein SAG2089 (105 aa).

The protein belongs to the UPF0473 family.

This is UPF0473 protein SAG2089 from Streptococcus agalactiae serotype V (strain ATCC BAA-611 / 2603 V/R).